Reading from the N-terminus, the 684-residue chain is Probable metal-nicotianamine transporter YSL9 (684 aa).

Residues 1 to 10 show a composition bias toward basic residues; that stretch reads MKQERRRKRQ. Residues 1 to 55 form a disordered region; it reads MKQERRRKRQPGPPRLELVVAHPREEEMAGLDGGGDAEEGATHARGGGGAPPPWR. Transmembrane regions (helical) follow at residues 58–78, 82–102, 130–150, 174–194, 234–254, 295–315, 341–361, 402–422, 430–450, 462–482, 515–535, 568–588, 612–632, and 642–662; these read LTARGLVASLAVGAMYSVIVM, LTTGLVPTLNVSAALIAFVVL, CAVACYSIAVGGGFGSYLLGL, GIAWMTGFLLAVSFVGLLALV, VNGFTKYFAMSFFWSFFQWFY, LVNLSLLLGAILSWGVMWPLI, FICVALILGDGLYNFVKIVAL, LAFSGYLGLTFIAVIAIPMMF, VVIAYLLAPALGFCNAYGAGL, IALFILAAWAGKDSGVVAGLV, IIAQAIGTVMGCVISPLTFFL, FSALPQHCLQLCYGFFGFAVA, VPFLVGASFAIDMCIGSLIVF, and AALMVPAVASGLICGDGLWIF.

Belongs to the YSL (TC 2.A.67.2) family.

The protein resides in the membrane. In terms of biological role, may be involved in the transport of nicotianamine-chelated metals. This is Probable metal-nicotianamine transporter YSL9 (YSL9) from Oryza sativa subsp. japonica (Rice).